A 311-amino-acid polypeptide reads, in one-letter code: Ribosomal RNA small subunit methyltransferase H (311 aa).

S-adenosyl-L-methionine contacts are provided by residues 34–36 (GGH), D54, F80, D104, and Q111.

Belongs to the methyltransferase superfamily. RsmH family.

It is found in the cytoplasm. The enzyme catalyses cytidine(1402) in 16S rRNA + S-adenosyl-L-methionine = N(4)-methylcytidine(1402) in 16S rRNA + S-adenosyl-L-homocysteine + H(+). Its function is as follows. Specifically methylates the N4 position of cytidine in position 1402 (C1402) of 16S rRNA. This chain is Ribosomal RNA small subunit methyltransferase H, found in Teredinibacter turnerae (strain ATCC 39867 / T7901).